The sequence spans 313 residues: Carbamate kinase 2 (313 aa).

It belongs to the carbamate kinase family.

The protein localises to the cytoplasm. It catalyses the reaction hydrogencarbonate + NH4(+) + ATP = carbamoyl phosphate + ADP + H2O + H(+). The protein operates within metabolic intermediate metabolism; carbamoyl phosphate degradation; CO(2) and NH(3) from carbamoyl phosphate: step 1/1. The sequence is that of Carbamate kinase 2 (arcC2) from Staphylococcus aureus (strain Mu50 / ATCC 700699).